The sequence spans 376 residues: Glutamate 5-kinase (376 aa).

K18 is a binding site for ATP. Residues S58, D145, and N157 each contribute to the substrate site. Residues 177–178 (SD) and 218–224 (TGGMASK) contribute to the ATP site. Residues 280–358 (TGALTLDAGA…SELPGELRRP (79 aa)) form the PUA domain.

This sequence belongs to the glutamate 5-kinase family.

It localises to the cytoplasm. It carries out the reaction L-glutamate + ATP = L-glutamyl 5-phosphate + ADP. Its pathway is amino-acid biosynthesis; L-proline biosynthesis; L-glutamate 5-semialdehyde from L-glutamate: step 1/2. In terms of biological role, catalyzes the transfer of a phosphate group to glutamate to form L-glutamate 5-phosphate. In Mycobacterium tuberculosis (strain CDC 1551 / Oshkosh), this protein is Glutamate 5-kinase.